The chain runs to 326 residues: WRKY transcription factor 8 (326 aa).

Positions 115–172 (VRVSASPSSSEADHHPGEDSGKIRKKREVRDGGEDDQRSQKVVKTKKKEEKKKEPRVS) are disordered. 2 stretches are compositionally biased toward basic and acidic residues: residues 125–153 (EADH…DQRS) and 161–170 (KKEEKKKEPR). The WRKY DNA-binding region spans 177–242 (TEVDHLEDGY…YESQHNHPIP (66 aa)).

This sequence belongs to the WRKY group II-c family. Interacts with VQ9 (via N-terminus). As to expression, highly expressed in roots and at lower levels in rosette leaves, cauline leaves, stems, flowers and siliques.

Its subcellular location is the nucleus. Its function is as follows. Transcription factor. Interacts specifically with the W box (5'-TTGAC[CT]-3'), a frequently occurring stress-responsive cis-acting element. Functions as a positive regulator of salt stress response. Binds the W box of LTI78/RD29A stress-response gene and directly regulates its transcription under salt stress. Functions antagonistically with VQ9 to regulate sodium and potassium homeostasis under salt stress by regulating the expression of downstream SOS (SALT OVERLY SENSITIVE) stress-responsive genes. The DNA-binding activity of WRKY8 is decreased by VQ9. Functions as a negative regulator of basal resistance to the bacterial pathogen P.syringae and as positive regulator of resistance to the fungal pathogen to B.cinerea. Functions as a positive regulator of defense response againt tobamovirus (TMV) by regulating both the abscisic acid and ethylene signaling pathways. Positively regulates ABI4 expression and negatively modulates ACS6 and ERF104 expression by directly binding to the W box consensus motifs within their promoters. This is WRKY transcription factor 8 (WRKY8) from Arabidopsis thaliana (Mouse-ear cress).